A 303-amino-acid polypeptide reads, in one-letter code: B1 kinase (303 aa).

It belongs to the protein kinase superfamily. Ser/Thr protein kinase family. Poxviruses subfamily. As to quaternary structure, interacts with host JIP1; this interaction increases the amount of MAPK bound to JIP1 and subsequently increases the activity of transcription factors, such as JUN, that respond to these complexes. Interacts with protein OPG198; this interaction inhibits the repressive activity of OPG198 pseudokinase on viral replication factory formation. Mg(2+) is required as a cofactor. In terms of processing, autophosphorylated.

The protein resides in the virion. Its subcellular location is the host cytoplasm. It catalyses the reaction L-seryl-[protein] + ATP = O-phospho-L-seryl-[protein] + ADP + H(+). The enzyme catalyses L-threonyl-[protein] + ATP = O-phospho-L-threonyl-[protein] + ADP + H(+). Functionally, essential serine/threonine-protein kinase that plays different role in the viral life cycle. Phosphorylates the host small ribosomal protein RACK1 thereby customizing the ribosomes to a state optimal for viral mRNAs (which contain poly-A leaders) but not for host mRNAs. Facilitates viral DNA replication by inhibiting host BANF1, a cellular host defense responsive to foreign DNA. Phosphorylates host BANF1 on serine and threonine residues; this leads to BANF1 relocalization to the cytoplasm, loss of dimerization and impaired DNA binding activity. Indeed, BANF1 activity depends on its DNA-binding property which is blocked by VPK1-mediated phosphorylation. Required for viral intermediate genes expression, probably by inhibiting host BANF1. Modulates cellular responses via host JUN by two different mechanisms, either by direct phosphorylation or by modulation of upstream JIP1-MAPK complexes. Seems to participate in the accumulation/processing of late proteins and thus in virion maturation. In addition, inhibits B12 repressive activity on viral DNA replication via a phosphorylation-dependent mechanism. In Cynomys gunnisoni (Gunnison's prairie dog), this protein is B1 kinase (OPG187).